A 578-amino-acid polypeptide reads, in one-letter code: Raftlin (578 aa).

Residue Gly2 is the site of N-myristoyl glycine attachment. The S-palmitoyl cysteine moiety is linked to residue Cys3. A compositionally biased stretch (polar residues) spans 169-184 (VNSAGSSAPVSTANST). Disordered regions lie at residues 169-271 (VNSA…VHEE), 449-525 (FSRE…PGGL), and 551-578 (CTGH…VEEN). 3 positions are modified to phosphoserine: Ser183, Ser199, and Ser220. Over residues 185 to 206 (EDARDAKNARGDHASLENEKPG) the composition is skewed to basic and acidic residues. Positions 457-466 (RQMRKSKGKL) are enriched in basic residues. A compositionally biased stretch (basic and acidic residues) spans 467–485 (SARDKQQAEENEKNLEDQS). Residue Ser505 is modified to Phosphoserine. 2 stretches are compositionally biased toward basic and acidic residues: residues 506–518 (EEMK…DKGE) and 557–578 (PGED…VEEN).

Belongs to the raftlin family. In terms of assembly, interacts with TLR4; the interaction occurs in response to lipopolysaccharide stimulation. Interacts with CLTC; the interaction occurs in response to pathogens. Interacts with AP2A1 and AP2B1. Expressed in B-cells (at protein level). Expressed in dendritic cells and macrophages.

It localises to the cell membrane. Its subcellular location is the cytoplasm. The protein resides in the membrane raft. The protein localises to the endosome. It is found in the early endosome. In terms of biological role, involved in protein trafficking via association with clathrin and AP2 complex. Upon bacterial lipopolysaccharide stimulation, mediates internalization of TLR4 to endosomes in dendritic cells and macrophages; and internalization of poly(I:C) to TLR3-positive endosomes in myeloid dendritic cells and epithelial cells; resulting in activation of TICAM1-mediated signaling and subsequent IFNB1 production. Involved in T-cell antigen receptor-mediated signaling by regulating tyrosine kinase LCK localization, T-cell dependent antibody production and cytokine secretion. May regulate B-cell antigen receptor-mediated signaling. May play a pivotal role in the formation and/or maintenance of lipid rafts. This chain is Raftlin (RFTN1), found in Homo sapiens (Human).